Reading from the N-terminus, the 671-residue chain is UvrABC system protein B (671 aa).

Positions 25–412 constitute a Helicase ATP-binding domain; that stretch reads EGIEAGLSHQ…AGRVVEQVVR (388 aa). 38–45 provides a ligand contact to ATP; the sequence is GVTGSGKT. A Beta-hairpin motif is present at residues 91 to 114; the sequence is YYDYYQPEAYVPSSDTFIEKDASI. A Helicase C-terminal domain is found at 429 to 582; it reads QVDDLLSEIR…QIAFNEANGI (154 aa). A UVR domain is found at 632–667; sequence TKRIKQLEEKMMQFARDLEFEAAAQLRDEIAQLRER.

This sequence belongs to the UvrB family. In terms of assembly, forms a heterotetramer with UvrA during the search for lesions. Interacts with UvrC in an incision complex.

It is found in the cytoplasm. In terms of biological role, the UvrABC repair system catalyzes the recognition and processing of DNA lesions. A damage recognition complex composed of 2 UvrA and 2 UvrB subunits scans DNA for abnormalities. Upon binding of the UvrA(2)B(2) complex to a putative damaged site, the DNA wraps around one UvrB monomer. DNA wrap is dependent on ATP binding by UvrB and probably causes local melting of the DNA helix, facilitating insertion of UvrB beta-hairpin between the DNA strands. Then UvrB probes one DNA strand for the presence of a lesion. If a lesion is found the UvrA subunits dissociate and the UvrB-DNA preincision complex is formed. This complex is subsequently bound by UvrC and the second UvrB is released. If no lesion is found, the DNA wraps around the other UvrB subunit that will check the other stand for damage. This Pseudomonas putida (strain ATCC 47054 / DSM 6125 / CFBP 8728 / NCIMB 11950 / KT2440) protein is UvrABC system protein B.